The chain runs to 67 residues: Beta-defensin 14 (67 aa).

The N-terminal stretch at 1-22 (MRLHYLLFVFLILFLVPAPGDA) is a signal peptide. Intrachain disulfides connect C33-C62, C40-C55, and C45-C63.

Belongs to the beta-defensin family.

Its subcellular location is the secreted. Functionally, has antibacterial activity. This is Beta-defensin 14 (Defb14) from Mus musculus (Mouse).